We begin with the raw amino-acid sequence, 802 residues long: ATP-dependent RNA helicase dbp4 (802 aa).

The segment at 1–24 (MAPINGSRNGKHSKPQRGGNLKRK) is disordered. Residues 9–24 (NGKHSKPQRGGNLKRK) show a composition bias toward basic residues. Residues 47-75 (EQFTDLPLSEPTASGLASSHYKTLTDIQS) carry the Q motif motif. In terms of domain architecture, Helicase ATP-binding spans 78-252 (ISHALKGRDI…RLSLQDPEYV (175 aa)). An ATP-binding site is contributed by 91–98 (AKTGSGKT). The short motif at 200–203 (DEAD) is the DEAD box element. The 164-residue stretch at 274–437 (PLPQKLDVLW…SIKDQLQNMC (164 aa)) folds into the Helicase C-terminal domain. 3 disordered regions span residues 494 to 538 (GDDT…KYDR), 589 to 614 (DKDL…KGAK), and 685 to 802 (LAEE…GLLG). Positions 520 to 538 (GEKKKTKKDETQVRTKYDR) are enriched in basic and acidic residues. Over residues 685–704 (LAEEAERTRQADLEDKEVAK) the composition is skewed to basic and acidic residues. Positions 705–714 (QKKREKKEKR) are enriched in basic residues.

Belongs to the DEAD box helicase family. DDX10/DBP4 subfamily. As to quaternary structure, interacts with the U3 and U14 snoRNAs. Associates with pre-ribosomal complexes.

It localises to the nucleus. The protein resides in the nucleolus. It carries out the reaction ATP + H2O = ADP + phosphate + H(+). ATP-dependent RNA helicase required for ribosome biogenesis. Involved in the release of U14 snoRNA in pre-ribosomal complexes. Required for pre-rRNA cleavage at site A2. The protein is ATP-dependent RNA helicase dbp4 (dbp4) of Aspergillus niger (strain ATCC MYA-4892 / CBS 513.88 / FGSC A1513).